The primary structure comprises 174 residues: Endoribonuclease YbeY (174 aa).

Positions 133, 137, and 143 each coordinate Zn(2+).

Belongs to the endoribonuclease YbeY family. Zn(2+) is required as a cofactor.

It is found in the cytoplasm. Its function is as follows. Single strand-specific metallo-endoribonuclease involved in late-stage 70S ribosome quality control and in maturation of the 3' terminus of the 16S rRNA. This Paracoccus denitrificans (strain Pd 1222) protein is Endoribonuclease YbeY.